A 103-amino-acid chain; its full sequence is Isocitrate dehydrogenase [NAD] subunit beta, mitochondrial (103 aa).

This sequence belongs to the isocitrate and isopropylmalate dehydrogenases family. As to quaternary structure, heterooligomer of subunits alpha (IDH3A), beta (IDH3B), and gamma (IDH3G) in the apparent ratio of 2:1:1. The heterodimer containing one IDH3A and one IDH3B subunit and the heterodimer containing one IDH3A and one IDH3G subunit assemble into a heterotetramer (which contains two subunits of IDH3A, one of IDH3B and one of IDH3G) and further into the heterooctamer.

It is found in the mitochondrion. The heterotetramer and the heterodimer composed of IDH3A and IDH3G subunits can be allosterically activated by citrate (CIT) or/and ADP, and the two activators can act independently or synergistically. The heterodimer composed of IDH3A and IDH3B subunits cannot be allosterically regulated and the allosteric regulation of the heterotetramer is through the IDH3G subunit and not the IDH3B subunit. The IDH3G subunit contains the allosteric site which consists of a CIT-binding site and an ADP-binding site, and the binding of CIT and ADP causes conformational changes at the allosteric site which are transmitted to the active site in the catalytic subunit (IDH3A) through a cascade of conformational changes at the heterodimer interface, leading to stabilization of the isocitrate-binding at the active site and thus activation of the enzyme. ATP can activate the heterotetramer and the heterodimer composed of IDH3A and IDH3G subunits at low concentrations but inhibits their activities at high concentrations, whereas ATP exhibits only inhibitory effect on the heterodimer composed of IDH3A and IDH3B subunits. Its function is as follows. Plays a structural role to facilitate the assembly and ensure the full activity of the enzyme catalyzing the decarboxylation of isocitrate (ICT) into alpha-ketoglutarate. The heterodimer composed of the alpha (IDH3A) and beta (IDH3B) subunits and the heterodimer composed of the alpha (IDH3A) and gamma (IDH3G) subunits, have considerable basal activity but the full activity of the heterotetramer (containing two subunits of IDH3A, one of IDH3B and one of IDH3G) requires the assembly and cooperative function of both heterodimers. This is Isocitrate dehydrogenase [NAD] subunit beta, mitochondrial (IDH3B) from Sus scrofa (Pig).